Consider the following 734-residue polypeptide: MASRFPKFSQGLAQDPTTRRIWFGIATAHDFESHDDITEERLYQKIFASHFGQLAIIFLWTSGNLFHVAWQGNFEAWVRDPLHVRPIAHAIWDLHFGQPAVEAFTRGGAPGPVNIAHSGVYQWWYTIGLRTNEDLYTGALFLLFLSAISLIAGRFHLQPKWKPSVSWFKNAESRLDHHLSGLFGVSSLAWTGHLVHVAIPESRGEHVRWDNFLDVLPYPRGLGPLFTGQWNLYAQNPDSSSHLFGTSQGAGTAILTLLGGFHPQTQSLWLTDIAHHHLAIAFVFFIAGHMYRTNFGIGHSIKDILEAHIPPGGLLGRGHKGLYNTINNSLHFQLGLALASLGVITSLVAQHMYSLPAYAFIAQDFTTQAALYTHHQYIAGFIMTGAFAHGAIFFIRDYNPEQNRDNVLARMLEHKEAIISHLSWASLFLGFHTLGLYVHNDVMLAFGTPEKQILIEPIFAQWIQSAHGKALYGFDVLLSSTNSPAFNAGQSIWLPGWLNAINDNSNSLFLTIGPGDFLVHHAIALGLHTTTLILVKGALDARGSKLMPDKKDFGYSFPCDGPGRGGTCDISAWDAFYLAVFWMLNTIGWVTFYWHWKHITLWQGNVAQFNESSTYLMGWLRDYLWLNSSQLINGYNPFGMNSLSVWAWMFLFGHLVWATGFMFLISWRGYWQELIETLAWAHERTPLANSVRWRDKPVALSIVQARLVGLAHFSVGYIFTYAAFLIASTSGKFG.

Helical transmembrane passes span 46-69 (IFASHFGQLAIIFLWTSGNLFHVA), 135-158 (LYTGALFLLFLSAISLIAGRFHLQ), 175-199 (LDHHLSGLFGVSSLAWTGHLVHVAI), 273-291 (IAHHHLAIAFVFFIAGHMY), 330-353 (LHFQLGLALASLGVITSLVAQHMY), 369-395 (AALYTHHQYIAGFIMTGAFAHGAIFFI), 417-439 (AIISHLSWASLFLGFHTLGLYVH), and 517-535 (FLVHHAIALGLHTTTLILV). Cys-559 and Cys-568 together coordinate [4Fe-4S] cluster. 2 consecutive transmembrane segments (helical) span residues 575-596 (AFYLAVFWMLNTIGWVTFYWHW) and 643-665 (LSVWAWMFLFGHLVWATGFMFLI). Positions 654, 662, and 670 each coordinate chlorophyll a. Trp-671 is a phylloquinone binding site. The helical transmembrane segment at 707–727 (LVGLAHFSVGYIFTYAAFLIA) threads the bilayer.

It belongs to the PsaA/PsaB family. In terms of assembly, the PsaA/B heterodimer binds the P700 chlorophyll special pair and subsequent electron acceptors. PSI consists of a core antenna complex that captures photons, and an electron transfer chain that converts photonic excitation into a charge separation. The eukaryotic PSI reaction center is composed of at least 11 subunits. Requires P700 is a chlorophyll a/chlorophyll a' dimer, A0 is one or more chlorophyll a, A1 is one or both phylloquinones and FX is a shared 4Fe-4S iron-sulfur center. as cofactor.

The protein localises to the plastid. Its subcellular location is the chloroplast thylakoid membrane. The enzyme catalyses reduced [plastocyanin] + hnu + oxidized [2Fe-2S]-[ferredoxin] = oxidized [plastocyanin] + reduced [2Fe-2S]-[ferredoxin]. Its function is as follows. PsaA and PsaB bind P700, the primary electron donor of photosystem I (PSI), as well as the electron acceptors A0, A1 and FX. PSI is a plastocyanin-ferredoxin oxidoreductase, converting photonic excitation into a charge separation, which transfers an electron from the donor P700 chlorophyll pair to the spectroscopically characterized acceptors A0, A1, FX, FA and FB in turn. Oxidized P700 is reduced on the lumenal side of the thylakoid membrane by plastocyanin. This is Photosystem I P700 chlorophyll a apoprotein A2 from Cycas taitungensis (Prince sago).